The following is a 430-amino-acid chain: Asparagine--tRNA ligase (430 aa).

It belongs to the class-II aminoacyl-tRNA synthetase family. As to quaternary structure, homodimer.

The protein localises to the cytoplasm. The enzyme catalyses tRNA(Asn) + L-asparagine + ATP = L-asparaginyl-tRNA(Asn) + AMP + diphosphate + H(+). The sequence is that of Asparagine--tRNA ligase from Pelotomaculum thermopropionicum (strain DSM 13744 / JCM 10971 / SI).